Reading from the N-terminus, the 254-residue chain is Phosphatidylglycerol--prolipoprotein diacylglyceryl transferase (254 aa).

Helical transmembrane passes span 11-31 (LAIR…LLLA), 49-69 (FLIA…IFEF), 84-104 (QGGL…YIYL), and 109-129 (ESFF…QAIG). Position 130 (Arg130) interacts with a 1,2-diacyl-sn-glycero-3-phospho-(1'-sn-glycerol). 3 helical membrane-spanning segments follow: residues 169–189 (PTFL…VYLL), 196–216 (GIVF…IEGL), and 228–248 (VAQL…YNII).

It belongs to the Lgt family.

The protein localises to the cell membrane. The catalysed reaction is L-cysteinyl-[prolipoprotein] + a 1,2-diacyl-sn-glycero-3-phospho-(1'-sn-glycerol) = an S-1,2-diacyl-sn-glyceryl-L-cysteinyl-[prolipoprotein] + sn-glycerol 1-phosphate + H(+). The protein operates within protein modification; lipoprotein biosynthesis (diacylglyceryl transfer). Catalyzes the transfer of the diacylglyceryl group from phosphatidylglycerol to the sulfhydryl group of the N-terminal cysteine of a prolipoprotein, the first step in the formation of mature lipoproteins. In Clostridium botulinum (strain Langeland / NCTC 10281 / Type F), this protein is Phosphatidylglycerol--prolipoprotein diacylglyceryl transferase.